Here is a 187-residue protein sequence, read N- to C-terminus: dTTP/UTP pyrophosphatase (187 aa).

Residue Asp65 is the Proton acceptor of the active site.

This sequence belongs to the Maf family. YhdE subfamily. A divalent metal cation is required as a cofactor.

The protein localises to the cytoplasm. It carries out the reaction dTTP + H2O = dTMP + diphosphate + H(+). The enzyme catalyses UTP + H2O = UMP + diphosphate + H(+). In terms of biological role, nucleoside triphosphate pyrophosphatase that hydrolyzes dTTP and UTP. May have a dual role in cell division arrest and in preventing the incorporation of modified nucleotides into cellular nucleic acids. This chain is dTTP/UTP pyrophosphatase, found in Pyrococcus abyssi (strain GE5 / Orsay).